The following is a 365-amino-acid chain: Anhydro-N-acetylmuramic acid kinase (365 aa).

9-16 (GTSLDGVD) contributes to the ATP binding site.

It belongs to the anhydro-N-acetylmuramic acid kinase family.

The catalysed reaction is 1,6-anhydro-N-acetyl-beta-muramate + ATP + H2O = N-acetyl-D-muramate 6-phosphate + ADP + H(+). The protein operates within amino-sugar metabolism; 1,6-anhydro-N-acetylmuramate degradation. It participates in cell wall biogenesis; peptidoglycan recycling. Catalyzes the specific phosphorylation of 1,6-anhydro-N-acetylmuramic acid (anhMurNAc) with the simultaneous cleavage of the 1,6-anhydro ring, generating MurNAc-6-P. Is required for the utilization of anhMurNAc either imported from the medium or derived from its own cell wall murein, and thus plays a role in cell wall recycling. The polypeptide is Anhydro-N-acetylmuramic acid kinase (Rhodopseudomonas palustris (strain BisB18)).